The following is an 869-amino-acid chain: DNA mismatch repair protein MutS (869 aa).

602–609 (GPNMSGKS) lines the ATP pocket.

This sequence belongs to the DNA mismatch repair MutS family.

In terms of biological role, this protein is involved in the repair of mismatches in DNA. It is possible that it carries out the mismatch recognition step. This protein has a weak ATPase activity. This Bacillus licheniformis (strain ATCC 14580 / DSM 13 / JCM 2505 / CCUG 7422 / NBRC 12200 / NCIMB 9375 / NCTC 10341 / NRRL NRS-1264 / Gibson 46) protein is DNA mismatch repair protein MutS.